Consider the following 883-residue polypeptide: Chromatin structure-remodeling complex protein RSC30 (883 aa).

Positions 14–45 form a DNA-binding region, zn(2)-C6 fungal-type; that stretch reads ACTQCRKRKIGCDRAKPICGNCVKYNKPDCFY. Disordered regions lie at residues 121-157 and 241-273; these read QNNN…DVPS and NTTA…TSRT. The span at 130-149 shows a compositional bias: polar residues; sequence APRQNSSTVSSNVHGNTIVR. Position 150 is a phosphoserine (Ser-150). Residues 241–251 are compositionally biased toward polar residues; that stretch reads NTTANKINKTG. Positions 252–270 are enriched in basic and acidic residues; sequence ENSKKGKVDGKRAGFDHQT.

In terms of assembly, forms a heteromer with RSC3. Interacts with NPL6. Component of the two forms of the RSC complex composed of at least either RSC1 or RSC2, and ARP7, ARP9, LDB7, NPL6, RSC3, RSC30, RSC4, RSC58, RSC6, RSC8, RSC9, SFH1, STH1, HTL1 and probably RTT102. The complexes interact with histone and histone variant components of centromeric chromatin. Component of a fungal-specific module (HTL1-LDB7-NPL6-RSC3-RSC30) within the RSC complex.

It localises to the nucleus. Component of the chromatin structure-remodeling complex (RSC), which is involved in transcription regulation and nucleosome positioning. RSC is responsible for the transfer of a histone octamer from a nucleosome core particle to naked DNA. The reaction requires ATP and involves an activated RSC-nucleosome intermediate. Remodeling reaction also involves DNA translocation, DNA twist and conformational change. As a reconfigurer of centromeric and flanking nucleosomes, RSC complex is required both for proper kinetochore function in chromosome segregation and, via a PKC1-dependent signaling pathway, for organization of the cellular cytoskeleton. This subunit is required for transcription of ribosomal protein genes and genes involved in the integrity of the cell wall. Together with HTL1, LDB7, NPL6, RSC3 components, defines a fungal-specific module within the RSC complex that plays a role in many cellular functions including the maintenance of cell wall integrity. The chain is Chromatin structure-remodeling complex protein RSC30 (RSC30) from Saccharomyces cerevisiae (strain ATCC 204508 / S288c) (Baker's yeast).